A 189-amino-acid chain; its full sequence is MSFSEQIQNLSLLLLEIGTIIGALGVVLLPNILYSGFLLGGVLICIAGIYLLLNAEFIAAAQVLIYVGAINVIILFAIMLVNKIENLNPSNNQMMRNGLSSFICFSFFILLSNMIFDTQWIDTVGVSTKYSISIIGNHIFSDFLLPFEIVSVLLLVTLVGAVFIARKEDASEIEISKISFLNLPDPSKK.

5 consecutive transmembrane segments (helical) span residues Leu-10 to Pro-30, Ile-32 to Leu-52, Ala-61 to Val-81, Gly-98 to Thr-118, and Leu-144 to Ile-164.

It belongs to the complex I subunit 6 family. As to quaternary structure, NDH is composed of at least 16 different subunits, 5 of which are encoded in the nucleus.

The protein localises to the plastid. Its subcellular location is the chloroplast thylakoid membrane. It carries out the reaction a plastoquinone + NADH + (n+1) H(+)(in) = a plastoquinol + NAD(+) + n H(+)(out). The enzyme catalyses a plastoquinone + NADPH + (n+1) H(+)(in) = a plastoquinol + NADP(+) + n H(+)(out). Functionally, NDH shuttles electrons from NAD(P)H:plastoquinone, via FMN and iron-sulfur (Fe-S) centers, to quinones in the photosynthetic chain and possibly in a chloroplast respiratory chain. The immediate electron acceptor for the enzyme in this species is believed to be plastoquinone. Couples the redox reaction to proton translocation, and thus conserves the redox energy in a proton gradient. In Mesostigma viride (Green alga), this protein is NAD(P)H-quinone oxidoreductase subunit 6, chloroplastic (ndhG).